Here is a 1389-residue protein sequence, read N- to C-terminus: Carboxypeptidase D (1389 aa).

The signal sequence occupies residues 1 to 25; it reads MAGAARGLLWAALSLCLLPEPLRAA. Over 26–1308 the chain is Extracellular; it reads HIKKAEAAAA…ENRIFGLPRE (1283 aa). Residues 46-383 form the Peptidase M14 1 domain; the sequence is RYLHAAELGQ…ESLLTFIEKV (338 aa). The segment at 95–133 is disordered; the sequence is LPEARQDGEKKKKEEEEEEEEEEGEEGGGGALPGRPQVK. Over residues 96 to 108 the composition is skewed to basic and acidic residues; sequence PEARQDGEKKKKE. A compositionally biased stretch (acidic residues) spans 109 to 120; that stretch reads EEEEEEEEEGEE. Zn(2+) contacts are provided by His-139 and Glu-142. Asn-172 carries an N-linked (GlcNAc...) asparagine glycan. Residues 188–235 are disordered; the sequence is ERAREGDCGGGGGGGGEGGGEPGGRENSRGRDLNRSFPDQFGSAQPDL. Residues 195 to 209 are compositionally biased toward gly residues; sequence CGGGGGGGGEGGGEP. Residues 210 to 221 show a composition bias toward basic and acidic residues; that stretch reads GGRENSRGRDLN. N-linked (GlcNAc...) asparagine glycosylation is present at Asn-221. His-260 is a Zn(2+) binding site. Glu-353 acts as the Proton donor/acceptor in catalysis. Residues Asn-402, Asn-413, Asn-432, and Asn-472 are each glycosylated (N-linked (GlcNAc...) asparagine). A Peptidase M14 2 domain is found at 511–801; sequence RHHHFSDMEI…RSLLQFIKQV (291 aa). 2 residues coordinate Zn(2+): His-573 and Glu-576. The segment at 614-639 is disordered; it reads SMNPDGYEKSQEGDRGGTVGRNNSNN. Basic and acidic residues predominate over residues 619 to 628; it reads GYEKSQEGDR. The N-linked (GlcNAc...) asparagine glycan is linked to Asn-635. His-680 provides a ligand contact to Zn(2+). The active-site Proton donor/acceptor is Glu-771. Residues Asn-820, Asn-876, Asn-958, Asn-981, Asn-1073, and Asn-1151 are each glycosylated (N-linked (GlcNAc...) asparagine). In terms of domain architecture, Peptidase M14 3 spans 935–1220; sequence RYRPYKDLSE…KSLLSMLVEV (286 aa). A helical transmembrane segment spans residues 1309-1329; that stretch reads LVVTVAGASMSALVLTACIIW. S-palmitoyl cysteine attachment occurs at residues Cys-1326, Cys-1330, and Cys-1332. The Cytoplasmic segment spans residues 1330–1389; that stretch reads CVCSIKSNRHKDGFPTLRQHHDDYEDEIRMMSTGSKKSLLSHEFQDETDTEEETLYSSKH. The segment at 1367-1389 is disordered; that stretch reads SLLSHEFQDETDTEEETLYSSKH.

The protein belongs to the peptidase M14 family. In terms of assembly, binds to pre-S, hepatitis B virus large envelope protein, via the carboxypeptidase-like domain. Zn(2+) is required as a cofactor. In terms of processing, the N-terminus is blocked. As to expression, expressed in liver, lung, kidney, heart, stomach, pancreas, spleen, gall bladder and intestine, but not in skeletal muscle.

It localises to the cell membrane. It catalyses the reaction Releases C-terminal Arg and Lys from polypeptides.. In Anas platyrhynchos (Mallard), this protein is Carboxypeptidase D (CPD).